The chain runs to 415 residues: Glycerate 2-kinase (415 aa).

Position 57 (lysine 57) interacts with substrate.

This sequence belongs to the glycerate kinase type-1 family. In terms of assembly, homodimer. Mg(2+) is required as a cofactor. The cofactor is Ni(2+). It depends on Mn(2+) as a cofactor. Co(2+) serves as cofactor.

It carries out the reaction (R)-glycerate + ATP = (2R)-2-phosphoglycerate + ADP + H(+). In terms of biological role, catalyzes the ATP-dependent phosphorylation of D-glycerate to 2-phosphoglycerate. It can also partially utilize GTP, CTP or UTP as phosphate donor. The sequence is that of Glycerate 2-kinase (gck) from Picrophilus torridus (strain ATCC 700027 / DSM 9790 / JCM 10055 / NBRC 100828 / KAW 2/3).